The primary structure comprises 323 residues: Aldo-keto reductase family 1 member C23-like protein (323 aa).

Position 20–24 (20–24 (GFGTY)) interacts with NADP(+). Lys-31 is a substrate binding site. Residue Asp-50 participates in NADP(+) binding. Tyr-55 acts as the Proton donor in catalysis. His-117 lines the substrate pocket. NADP(+)-binding positions include 166 to 167 (SN), Gln-190, 216 to 222 (YGALGTQ), and 270 to 280 (KSYNEKRIKEN).

This sequence belongs to the aldo/keto reductase family. As to quaternary structure, monomer. In terms of tissue distribution, detected in endometrium surface epithelium (at protein level). Detected in endometrium.

It is found in the cytoplasm. Its function is as follows. NADP-dependent oxidoreductase involved in steroid metabolism. May act on various hydroxysteroids. This Equus caballus (Horse) protein is Aldo-keto reductase family 1 member C23-like protein (PGFS).